The primary structure comprises 376 residues: Alanine racemase (376 aa).

K40 functions as the Proton acceptor; specific for D-alanine in the catalytic mechanism. Residue K40 is modified to N6-(pyridoxal phosphate)lysine. R138 is a binding site for substrate. Y270 serves as the catalytic Proton acceptor; specific for L-alanine. M317 is a binding site for substrate.

This sequence belongs to the alanine racemase family. The cofactor is pyridoxal 5'-phosphate.

The catalysed reaction is L-alanine = D-alanine. The protein operates within amino-acid biosynthesis; D-alanine biosynthesis; D-alanine from L-alanine: step 1/1. In terms of biological role, catalyzes the interconversion of L-alanine and D-alanine. May also act on other amino acids. This chain is Alanine racemase (alr), found in Lactobacillus gasseri (strain ATCC 33323 / DSM 20243 / BCRC 14619 / CIP 102991 / JCM 1131 / KCTC 3163 / NCIMB 11718 / NCTC 13722 / AM63).